Consider the following 184-residue polypeptide: Large ribosomal subunit protein uL6 (184 aa).

It belongs to the universal ribosomal protein uL6 family. Part of the 50S ribosomal subunit.

Its function is as follows. This protein binds to the 23S rRNA, and is important in its secondary structure. It is located near the subunit interface in the base of the L7/L12 stalk, and near the tRNA binding site of the peptidyltransferase center. The protein is Large ribosomal subunit protein uL6 of Thermotoga neapolitana (strain ATCC 49049 / DSM 4359 / NBRC 107923 / NS-E).